The primary structure comprises 90 residues: Small ribosomal subunit protein uS15 (90 aa).

The protein belongs to the universal ribosomal protein uS15 family. In terms of assembly, part of the 30S ribosomal subunit. Forms a bridge to the 50S subunit in the 70S ribosome, contacting the 23S rRNA.

In terms of biological role, one of the primary rRNA binding proteins, it binds directly to 16S rRNA where it helps nucleate assembly of the platform of the 30S subunit by binding and bridging several RNA helices of the 16S rRNA. Forms an intersubunit bridge (bridge B4) with the 23S rRNA of the 50S subunit in the ribosome. This chain is Small ribosomal subunit protein uS15, found in Wolbachia pipientis wMel.